Reading from the N-terminus, the 885-residue chain is DDT domain-containing protein DDB_G0282237 (885 aa).

One can recognise a WAC domain in the interval 20–125 (EEYFVIKFTK…GEIVSFKKAN (106 aa)). Disordered regions lie at residues 141-184 (ESDE…INAL), 201-264 (DDEN…SVRK), and 367-431 (LEDT…KENE). Residues 154–180 (SSSSSSTTTTTTTPTTPPTTTTTTSSS) show a composition bias toward low complexity. The segment covering 210–264 (KNNGDTSSDKKGEKEKEKEKEKEKEKEKEKEKEKEKEKEKEKEKEKDSDTKSVRK) has biased composition (basic and acidic residues). Positions 217 to 260 (SDKKGEKEKEKEKEKEKEKEKEKEKEKEKEKEKEKEKEKDSDTK) form a coiled coil. Residues 367 to 379 (LEDTEEESVDIES) show a composition bias toward acidic residues. A compositionally biased stretch (low complexity) spans 380 to 396 (NDNSNSNGNSNSNNNLD). Residues 443–503 (SNTFGDFLMV…MKTIFTLPSY (61 aa)) enclose the DDT domain. Residues 530–565 (FQNEVKRIAIEEKEKQEKLKQLEEQNIRMLNLANEL) adopt a coiled-coil conformation. 2 disordered regions span residues 562 to 632 (ANEL…WKEE) and 707 to 744 (KQDD…QKKP). Residues 567 to 577 (GSDDEDDEMKL) are compositionally biased toward acidic residues. Positions 578-603 (DEDGNEIKKDVEMKDNDGTKDTKKDD) are enriched in basic and acidic residues. Coiled coils occupy residues 593 to 628 (NDGT…GEEE) and 674 to 782 (ASEK…RDRN). Composition is skewed to acidic residues over residues 604 to 631 (EENE…EWKE) and 715 to 729 (AEDD…EEQQ).

The protein localises to the nucleus. The protein is DDT domain-containing protein DDB_G0282237 of Dictyostelium discoideum (Social amoeba).